Consider the following 1135-residue polypeptide: Topless-related protein 4 (1135 aa).

The 33-residue stretch at 4–36 folds into the LisH domain; it reads LSRELVFLILQFLDEEKFKDTVHRLEKESGFFF. The 59-residue stretch at 34 to 92 folds into the CTLH domain; it reads FFFNMRYFEDSVTAGEWDDVEKYLSGFTKVDDNRYSMKIFFEIRKQKYLEALDKKDHAK. Position 214 is a phosphoserine (serine 214). The interval 281-303 is disordered; the sequence is LKRERPRSPPTNSLSMDYQTADS. Over residues 290 to 303 the composition is skewed to polar residues; the sequence is PTNSLSMDYQTADS. WD repeat units follow at residues 355 to 395, 417 to 456, 462 to 503, 506 to 547, 550 to 593, 597 to 636, 638 to 680, 776 to 815, 843 to 881, 884 to 924, 927 to 966, and 1020 to 1059; these read SQGS…KLVS, EYTAAVNRVVWSPDGGLLGVAYSKHIVHIYSYHGGEDLRN, AHAG…KLHT, GHEA…SRVD, APGR…VKRT, LGKRSVGVVQFDTMKNKFLVAGDEFQVKFWDMDSVDLLSS, AAEG…RILH, LLPARVVKLIYTNSGGAILALAENAAHKLWKWQKSERNLL, NKEDVVPCFALSKNDSYVMSASGGKISLFNMMTFKTMTT, APPP…VKSK, GHQKRVTGLAFSNVLNVLVSSGADSQLCVWSMDGWEKQAS, and ESSGSVTDAVYSCDSQSIYAAFDDGSVSILTATTLQLKCR. Positions 1095 to 1135 are disordered; the sequence is DGGVHVIEPPGPEGKWGISAPPENGAGPSVSSAPGSDQQPR. Low complexity predominate over residues 1119–1135; it reads GAGPSVSSAPGSDQQPR.

Tetramer. Interacts with WUS (via the C-terminal domain). Interacts with SPL (via EAR motif). Interacts with SPEAR3/TIE1. Binds to and corepresses GAF1/IDD2 at the promoter of GA20OX2 gene.

Its subcellular location is the nucleus. Transcription corepressor of Zinc finger transcription factors GAF1/IDD2 and ENY/IDD1 in regulation of gibberellin homeostasis and signaling. In Arabidopsis thaliana (Mouse-ear cress), this protein is Topless-related protein 4 (TPR4).